We begin with the raw amino-acid sequence, 199 residues long: SCO2-like protein RBE_0029 (199 aa).

This sequence belongs to the SCO1/2 family.

This Rickettsia bellii (strain RML369-C) protein is SCO2-like protein RBE_0029.